Reading from the N-terminus, the 241-residue chain is Geranylgeranylglyceryl phosphate synthase (241 aa).

Asp-19 and Ser-46 together coordinate Mg(2+). Residues Tyr-167–Gly-173, Gly-198–Gly-199, and Gly-220–Thr-221 each bind sn-glycerol 1-phosphate.

Belongs to the GGGP/HepGP synthase family. Group II subfamily. Mg(2+) is required as a cofactor.

It localises to the cytoplasm. The catalysed reaction is sn-glycerol 1-phosphate + (2E,6E,10E)-geranylgeranyl diphosphate = sn-3-O-(geranylgeranyl)glycerol 1-phosphate + diphosphate. Its pathway is membrane lipid metabolism; glycerophospholipid metabolism. Its function is as follows. Prenyltransferase that catalyzes the transfer of the geranylgeranyl moiety of geranylgeranyl diphosphate (GGPP) to the C3 hydroxyl of sn-glycerol-1-phosphate (G1P). This reaction is the first ether-bond-formation step in the biosynthesis of archaeal membrane lipids. The sequence is that of Geranylgeranylglyceryl phosphate synthase from Pyrobaculum calidifontis (strain DSM 21063 / JCM 11548 / VA1).